We begin with the raw amino-acid sequence, 179 residues long: Ribosome maturation factor RimM (179 aa).

Positions 96–179 constitute a PRC barrel domain; sequence DNEFYWVDLI…KITVDWGLDY (84 aa).

This sequence belongs to the RimM family. As to quaternary structure, binds ribosomal protein uS19.

The protein localises to the cytoplasm. Its function is as follows. An accessory protein needed during the final step in the assembly of 30S ribosomal subunit, possibly for assembly of the head region. Essential for efficient processing of 16S rRNA. May be needed both before and after RbfA during the maturation of 16S rRNA. It has affinity for free ribosomal 30S subunits but not for 70S ribosomes. In Janthinobacterium sp. (strain Marseille) (Minibacterium massiliensis), this protein is Ribosome maturation factor RimM.